The sequence spans 227 residues: Cytochrome c oxidase subunit 2 (227 aa).

Residues 1-14 (MAYPMQLGFQDATS) lie on the Mitochondrial intermembrane side of the membrane. The chain crosses the membrane as a helical span at residues 15-45 (PIMEELLHFHDHTLMIVFLISSLVLYIISLM). Over 46–59 (LTTKLTHTSTMDAQ) the chain is Mitochondrial matrix. A helical membrane pass occupies residues 60-87 (EVETIWTILPAIILIMIALPSLRILYMM). The Mitochondrial intermembrane segment spans residues 88–227 (DEINNPSLTV…YFEKWSASML (140 aa)). Residues C196, E198, C200, H204, and M207 each contribute to the Cu cation site. E198 lines the Mg(2+) pocket. Position 218 is a phosphotyrosine (Y218).

Belongs to the cytochrome c oxidase subunit 2 family. Component of the cytochrome c oxidase (complex IV, CIV), a multisubunit enzyme composed of 14 subunits. The complex is composed of a catalytic core of 3 subunits MT-CO1, MT-CO2 and MT-CO3, encoded in the mitochondrial DNA, and 11 supernumerary subunits COX4I, COX5A, COX5B, COX6A, COX6B, COX6C, COX7A, COX7B, COX7C, COX8 and NDUFA4, which are encoded in the nuclear genome. The complex exists as a monomer or a dimer and forms supercomplexes (SCs) in the inner mitochondrial membrane with NADH-ubiquinone oxidoreductase (complex I, CI) and ubiquinol-cytochrome c oxidoreductase (cytochrome b-c1 complex, complex III, CIII), resulting in different assemblies (supercomplex SCI(1)III(2)IV(1) and megacomplex MCI(2)III(2)IV(2)). Found in a complex with TMEM177, COA6, COX18, COX20, SCO1 and SCO2. Interacts with TMEM177 in a COX20-dependent manner. Interacts with COX20. Interacts with COX16. The cofactor is Cu cation.

The protein localises to the mitochondrion inner membrane. The catalysed reaction is 4 Fe(II)-[cytochrome c] + O2 + 8 H(+)(in) = 4 Fe(III)-[cytochrome c] + 2 H2O + 4 H(+)(out). In terms of biological role, component of the cytochrome c oxidase, the last enzyme in the mitochondrial electron transport chain which drives oxidative phosphorylation. The respiratory chain contains 3 multisubunit complexes succinate dehydrogenase (complex II, CII), ubiquinol-cytochrome c oxidoreductase (cytochrome b-c1 complex, complex III, CIII) and cytochrome c oxidase (complex IV, CIV), that cooperate to transfer electrons derived from NADH and succinate to molecular oxygen, creating an electrochemical gradient over the inner membrane that drives transmembrane transport and the ATP synthase. Cytochrome c oxidase is the component of the respiratory chain that catalyzes the reduction of oxygen to water. Electrons originating from reduced cytochrome c in the intermembrane space (IMS) are transferred via the dinuclear copper A center (CU(A)) of subunit 2 and heme A of subunit 1 to the active site in subunit 1, a binuclear center (BNC) formed by heme A3 and copper B (CU(B)). The BNC reduces molecular oxygen to 2 water molecules using 4 electrons from cytochrome c in the IMS and 4 protons from the mitochondrial matrix. The protein is Cytochrome c oxidase subunit 2 (MT-CO2) of Ovis aries (Sheep).